A 276-amino-acid chain; its full sequence is MAKPYDPKDFYYRKAKKEGLRARSAFKIDEILRRHRLLRKGQAVLDLGAAPGGFLQILADEVGETGVAVGVDLEPVRRLGKPWVKTAIVDLLSPGALDQIRTLHAGPFQLVTSDMAPKTIGVKITDEARSLELVRMALDVAEKTLAPGGAFVAKVFMGGEFPVLKKELQARFDEVHVIRPEAVRESSYEVYVLGKGLRRAAARAAPTANATPTPTSTSTSTPTSTSTPTSTSTSTPAPTLTQTQTQTPKKPARRAPAKASTAGKAKAKTGASRRTR.

5 residues coordinate S-adenosyl-L-methionine: glycine 52, phenylalanine 54, aspartate 72, aspartate 90, and aspartate 114. Catalysis depends on lysine 154, which acts as the Proton acceptor. Residues 203-249 (RAAPTANATPTPTSTSTSTPTSTSTPTSTSTSTPAPTLTQTQTQTPK) show a composition bias toward low complexity. The tract at residues 203–276 (RAAPTANATP…AKTGASRRTR (74 aa)) is disordered. The span at 265-276 (AKAKTGASRRTR) shows a compositional bias: basic residues.

Belongs to the class I-like SAM-binding methyltransferase superfamily. RNA methyltransferase RlmE family.

The protein localises to the cytoplasm. The catalysed reaction is uridine(2552) in 23S rRNA + S-adenosyl-L-methionine = 2'-O-methyluridine(2552) in 23S rRNA + S-adenosyl-L-homocysteine + H(+). Its function is as follows. Specifically methylates the uridine in position 2552 of 23S rRNA at the 2'-O position of the ribose in the fully assembled 50S ribosomal subunit. This is Ribosomal RNA large subunit methyltransferase E from Anaeromyxobacter sp. (strain Fw109-5).